We begin with the raw amino-acid sequence, 338 residues long: Phenylalanine--tRNA ligase alpha subunit (338 aa).

Glu252 contacts Mg(2+).

Belongs to the class-II aminoacyl-tRNA synthetase family. Phe-tRNA synthetase alpha subunit type 1 subfamily. Tetramer of two alpha and two beta subunits. Mg(2+) serves as cofactor.

Its subcellular location is the cytoplasm. The enzyme catalyses tRNA(Phe) + L-phenylalanine + ATP = L-phenylalanyl-tRNA(Phe) + AMP + diphosphate + H(+). This is Phenylalanine--tRNA ligase alpha subunit from Pseudomonas fluorescens (strain Pf0-1).